The sequence spans 54 residues: MARNEIRPIVKLRSTAGTGYTYVTRKNRRNDPDRMVLRKYDPVVRKHVDFREER.

The protein belongs to the bacterial ribosomal protein bL33 family.

This is Large ribosomal subunit protein bL33A from Mycobacteroides abscessus (strain ATCC 19977 / DSM 44196 / CCUG 20993 / CIP 104536 / JCM 13569 / NCTC 13031 / TMC 1543 / L948) (Mycobacterium abscessus).